We begin with the raw amino-acid sequence, 337 residues long: 3-isopropylmalate dehydrogenase (337 aa).

Substrate contacts are provided by arginine 86, arginine 96, arginine 117, and aspartate 201. 3 residues coordinate Mg(2+): aspartate 201, aspartate 225, and aspartate 229. An NAD(+)-binding site is contributed by 258–270 (GAAFDIAGKNIGN).

It belongs to the isocitrate and isopropylmalate dehydrogenases family. Homotetramer. The cofactor is Mg(2+). Mn(2+) is required as a cofactor.

Its subcellular location is the cytoplasm. The catalysed reaction is (2R,3S)-3-isopropylmalate + NAD(+) = 4-methyl-2-oxopentanoate + CO2 + NADH. The protein operates within amino-acid biosynthesis; L-leucine biosynthesis; L-leucine from 3-methyl-2-oxobutanoate: step 3/4. Catalyzes the oxidation of 3-carboxy-2-hydroxy-4-methylpentanoate (3-isopropylmalate) to 3-carboxy-4-methyl-2-oxopentanoate. The product decarboxylates to 4-methyl-2 oxopentanoate. The chain is 3-isopropylmalate dehydrogenase (leuB) from Sulfurisphaera tokodaii (strain DSM 16993 / JCM 10545 / NBRC 100140 / 7) (Sulfolobus tokodaii).